We begin with the raw amino-acid sequence, 406 residues long: Mitochondrial potassium channel (406 aa).

A mitochondrion-targeting transit peptide spans 1–35; the sequence is MTGCSPVFAMQHVVGVPRILVRRTFLGTDVTMTRT. Over 36 to 198 the chain is Mitochondrial matrix; that stretch reads LCSPGPREKR…KERTRAERTK (163 aa). Residues 113–140 adopt a coiled-coil conformation; it reads VREAREGLEAQQTKLKEVRDRLDRVSRE. Residues 199–219 traverse the membrane as a helical segment; sequence NWSLIGSVLGALIGVAGSTYV. Topologically, residues 220 to 382 are mitochondrial intermembrane; sequence NRVRLQELKA…LEAQANRNTV (163 aa). Residues 383–403 form a helical membrane-spanning segment; the sequence is SSTLVTCVTFLATLPLLYMLF. The Mitochondrial matrix segment spans residues 404-406; sequence KTS.

In terms of assembly, the mitochondrial potassium channel (mitoK(ATP)) is composed of 4 subunits of CCDC51/MITOK and 4 subunits of ABCB8/MITOSUR.

Its subcellular location is the mitochondrion inner membrane. The catalysed reaction is K(+)(in) = K(+)(out). Inhibited by ATP via mitoK(ATP) channel. Functionally, pore-forming subunit of the mitochondrial ATP-gated potassium channel (mitoK(ATP)). Together with ATP-binding subunit ABCB8/MITOSUR of the mitoK(ATP) channel, mediates ATP-dependent K(+) currents across the mitochondrial inner membrane. An increase in ATP intracellular levels closes the channel, inhibiting K(+) transport, whereas a decrease in ATP levels enhances K(+) uptake in the mitochondrial matrix. May contribute to the homeostatic control of cellular metabolism under stress conditions by regulating the mitochondrial matrix volume. This chain is Mitochondrial potassium channel, found in Mus musculus (Mouse).